The chain runs to 1493 residues: Protein Shroom4 (1493 aa).

Positions 10 to 92 (YVPVQLQGGA…ILKLIVRRRN (83 aa)) constitute a PDZ domain. The tract at residues 202 to 282 (CALSLRPEEP…PPQPPVRRDS (81 aa)) is disordered. Polar residues-rich tracts occupy residues 234-243 (AETSGGSRRT) and 249-262 (TPSS…QEGY). Phosphoserine is present on Ser-411. Residues 430–695 (GSKGMELPPV…SPGQRPGQSS (266 aa)) form a disordered region. Basic and acidic residues-rich tracts occupy residues 470-484 (QSSK…DDRS) and 498-509 (GEADGHPSEKGF). Polar residues predominate over residues 513–547 (NRTSRAASELANQQPSASGSLVQQATDCSSTTKAA). Residue Ser-729 is modified to Phosphoserine. Disordered stretches follow at residues 740 to 759 (AAME…ASTA) and 781 to 813 (SKSL…NFQP). Polar residues predominate over residues 782-802 (KSLSTSHLPGLTTHSNKTFTQ). Ser-1019 is subject to Phosphoserine. Disordered stretches follow at residues 1117–1170 (AAQQ…ETSG), 1187–1206 (SFGH…AEQE), 1214–1236 (DFLP…PCYY), and 1246–1265 (GQEA…PPSG). The segment covering 1118 to 1129 (AQQQKQQQQQQK) has biased composition (low complexity). Residues 1132–1159 (EEEEEEEEEEEEEEEEEEEEAEEEEEEL) are compositionally biased toward acidic residues. Positions 1213–1492 (SDFLPPIRGH…RESLLLGPSN (280 aa)) constitute an ASD2 domain. Positions 1382–1488 (LSGRLARVEN…LKCLRESLLL (107 aa)) form a coiled coil.

Belongs to the shroom family. In terms of assembly, interacts directly with F-actin. Expressed in all fetal and adult tissues investigated. Expressed in adult heart, brain, placenta, lung, liver, skeletal muscle, kidney and pancreas. In brain regions detected in cerebellum, cerebral cortex, medulla, spinal cord, occipital pole, frontal lobe, temporal lobe and putamen. The expression is strongest in the medulla and weakest in the cerebral cortex.

It localises to the cytoplasm. Its subcellular location is the cytoskeleton. In terms of biological role, probable regulator of cytoskeletal architecture that plays an important role in development. May regulate cellular and cytoskeletal architecture by modulating the spatial distribution of myosin II. The sequence is that of Protein Shroom4 (SHROOM4) from Homo sapiens (Human).